The primary structure comprises 222 residues: 3-demethoxyubiquinol 3-hydroxylase (222 aa).

Fe cation is bound by residues glutamate 71, glutamate 101, histidine 104, glutamate 153, glutamate 185, and histidine 188.

The protein belongs to the COQ7 family. Requires Fe cation as cofactor.

The protein localises to the cell membrane. The enzyme catalyses a 5-methoxy-2-methyl-3-(all-trans-polyprenyl)benzene-1,4-diol + AH2 + O2 = a 3-demethylubiquinol + A + H2O. The protein operates within cofactor biosynthesis; ubiquinone biosynthesis. Catalyzes the hydroxylation of 2-nonaprenyl-3-methyl-6-methoxy-1,4-benzoquinol during ubiquinone biosynthesis. The sequence is that of 3-demethoxyubiquinol 3-hydroxylase from Bordetella pertussis (strain Tohama I / ATCC BAA-589 / NCTC 13251).